The following is a 491-amino-acid chain: Protein OrfX3 (491 aa).

Belongs to the TULIP P47 family. Heterodimer of OrfX1 and OrfX3; crystallizes as a dimer of heterodimers.

Expression of the ptox operon (ntnh-orfX1-orfX2-orfX3-pmp1) in B.thuringiensis kills Anopheles but not Aedes mosquito 3rd instar larvae. The ntnh-pmp1 construct is about half as toxic. This is Protein OrfX3 from Paraclostridium bifermentans (Clostridium bifermentans).